A 751-amino-acid chain; its full sequence is Zinc finger protein 337 (751 aa).

The 72-residue stretch at leucine 12–alanine 83 folds into the KRAB domain. Residues glutamine 101–aspartate 116 are compositionally biased toward low complexity. Residues glutamine 101 to threonine 163 form a disordered region. The segment at phenylalanine 180–histidine 202 adopts a C2H2-type 1; degenerate zinc-finger fold. 9 consecutive C2H2-type zinc fingers follow at residues phenylalanine 208–histidine 230, tyrosine 236–histidine 258, phenylalanine 264–histidine 286, tyrosine 292–histidine 314, phenylalanine 320–histidine 342, tyrosine 348–histidine 370, phenylalanine 376–histidine 398, phenylalanine 404–histidine 426, and phenylalanine 432–histidine 454. A Glycyl lysine isopeptide (Lys-Gly) (interchain with G-Cter in SUMO2) cross-link involves residue lysine 458. C2H2-type zinc fingers lie at residues phenylalanine 460–histidine 482, tyrosine 488–histidine 510, phenylalanine 516–histidine 538, phenylalanine 544–histidine 566, phenylalanine 572–histidine 594, phenylalanine 600–histidine 622, phenylalanine 628–histidine 650, phenylalanine 656–histidine 679, phenylalanine 685–histidine 707, and tyrosine 713–histidine 735.

The protein belongs to the krueppel C2H2-type zinc-finger protein family.

It is found in the nucleus. In terms of biological role, may be involved in transcriptional regulation. The sequence is that of Zinc finger protein 337 (ZNF337) from Homo sapiens (Human).